Reading from the N-terminus, the 453-residue chain is MIPIIVLIGRTNVGKSTLFNVLTKTRDALVANYPGITRDRQYGYCKLQSNKKIILIDTAGLDIKLNEIEKQAQAQTLIAIKEAHLILFLVNARDGLMPQEYEISKNIRKYQKKTILVINKIDGINEASKINEFYSLGFEKIQKISASHNQGINTLINRYLIPWISEKFKKKITENLYKDTELKKIAIKVAFIGRPNVGKSTLINGILKEERMITSNTPGTTLDSISTPIKYNYENYTLIDTAGASKKKKKINDFQRFSIIKTLQTIEKSNVILLIIDASLQTCHQDLSLADFIIHSGKGIVVVVNKCDLFNSVELKKIKELIKSKLKFLYFSKIHFISALYKKGIFQLFKSIKESYEDSKRKISTSTLIRTMHIAIKKHQPPIIKGRRIKLKYAHLGSSNPPKIIIHGNQVKYLSLPYKRYLINFFYKTLKIKGTPIQIQFKDNENPYVKNKN.

EngA-type G domains follow at residues 3–167 (PIIV…ISEK) and 187–360 (IKVA…EDSK). GTP is bound by residues 9–16 (GRTNVGKS), 57–61 (DTAGL), 119–122 (NKID), 193–200 (GRPNVGKS), 240–244 (DTAGA), and 305–308 (NKCD). The KH-like domain maps to 361 to 445 (RKISTSTLIR…PIQIQFKDNE (85 aa)).

This sequence belongs to the TRAFAC class TrmE-Era-EngA-EngB-Septin-like GTPase superfamily. EngA (Der) GTPase family. In terms of assembly, associates with the 50S ribosomal subunit.

Functionally, GTPase that plays an essential role in the late steps of ribosome biogenesis. This chain is GTPase Der, found in Buchnera aphidicola subsp. Acyrthosiphon pisum (strain Tuc7).